Here is a 199-residue protein sequence, read N- to C-terminus: Glycerol-3-phosphate acyltransferase (199 aa).

The next 4 membrane-spanning stretches (helical) occupy residues 2 to 22 (LEVLLVLLGYVLGSVPTGILV), 77 to 97 (PWVLAAVALAAVVGHCWPVFL), 113 to 133 (IALAPPVGLGMFALWWVVALA), and 139 to 159 (LAAMVVTVVSPFAFLLSGQPL).

It belongs to the PlsY family. As to quaternary structure, probably interacts with PlsX.

It is found in the cell membrane. It carries out the reaction an acyl phosphate + sn-glycerol 3-phosphate = a 1-acyl-sn-glycero-3-phosphate + phosphate. It participates in lipid metabolism; phospholipid metabolism. Functionally, catalyzes the transfer of an acyl group from acyl-phosphate (acyl-PO(4)) to glycerol-3-phosphate (G3P) to form lysophosphatidic acid (LPA). This enzyme utilizes acyl-phosphate as fatty acyl donor, but not acyl-CoA or acyl-ACP. The protein is Glycerol-3-phosphate acyltransferase of Rubrobacter xylanophilus (strain DSM 9941 / JCM 11954 / NBRC 16129 / PRD-1).